We begin with the raw amino-acid sequence, 383 residues long: Acetylornithine deacetylase (383 aa).

Residue histidine 80 participates in Zn(2+) binding. The active site involves aspartate 82. Aspartate 112 serves as a coordination point for Zn(2+). Glutamate 144 is a catalytic residue. Zn(2+) contacts are provided by glutamate 145, glutamate 169, and histidine 355.

The protein belongs to the peptidase M20A family. ArgE subfamily. In terms of assembly, homodimer. Zn(2+) serves as cofactor. Co(2+) is required as a cofactor. Requires glutathione as cofactor.

It localises to the cytoplasm. It carries out the reaction N(2)-acetyl-L-ornithine + H2O = L-ornithine + acetate. It functions in the pathway amino-acid biosynthesis; L-arginine biosynthesis; L-ornithine from N(2)-acetyl-L-ornithine (linear): step 1/1. Functionally, catalyzes the hydrolysis of the amide bond of N(2)-acetylated L-amino acids. Cleaves the acetyl group from N-acetyl-L-ornithine to form L-ornithine, an intermediate in L-arginine biosynthesis pathway, and a branchpoint in the synthesis of polyamines. In Escherichia coli O8 (strain IAI1), this protein is Acetylornithine deacetylase.